A 287-amino-acid chain; its full sequence is Gene 31 protein (287 aa).

The disordered stretch occupies residues 13 to 58 (AGRPAGLPGRGGQPGLAGAEGGEGRAGPGAHGDGVRQGGGLQTGGA). Residues 20–58 (PGRGGQPGLAGAEGGEGRAGPGAHGDGVRQGGGLQTGGA) show a composition bias toward gly residues.

This sequence belongs to the herpesviridae UL92 family.

This is Gene 31 protein (31) from Equine herpesvirus 2 (strain 86/87) (EHV-2).